The chain runs to 202 residues: Na(+)-translocating NADH-quinone reductase subunit E (202 aa).

Transmembrane regions (helical) follow at residues 5–25, 35–55, 81–101, 114–134, 144–164, and 180–200; these read VSLF…FLGM, VSTA…TVPL, FLGL…LEMF, GVFL…LFMV, LTYG…LAGI, and LGIT…FGGM.

It belongs to the NqrDE/RnfAE family. In terms of assembly, composed of six subunits; NqrA, NqrB, NqrC, NqrD, NqrE and NqrF.

It is found in the cell inner membrane. It carries out the reaction a ubiquinone + n Na(+)(in) + NADH + H(+) = a ubiquinol + n Na(+)(out) + NAD(+). NQR complex catalyzes the reduction of ubiquinone-1 to ubiquinol by two successive reactions, coupled with the transport of Na(+) ions from the cytoplasm to the periplasm. NqrA to NqrE are probably involved in the second step, the conversion of ubisemiquinone to ubiquinol. The protein is Na(+)-translocating NADH-quinone reductase subunit E of Psychrobacter sp. (strain PRwf-1).